Consider the following 156-residue polypeptide: Arginine repressor (156 aa).

It belongs to the ArgR family.

It localises to the cytoplasm. It functions in the pathway amino-acid biosynthesis; L-arginine biosynthesis [regulation]. Functionally, regulates arginine biosynthesis genes. The polypeptide is Arginine repressor (Edwardsiella ictaluri (strain 93-146)).